A 348-amino-acid chain; its full sequence is MSLIPYALTRPFLFGMDPESAHDLTMNLMAKGQNTLLQQAWAQPMVSDPVELAGLKFPNRVGMAAGLDKNARCIDALAAMGFGFVEVGTVTPRPQPGNPKPRMFRIPERNALINRLGFNNEGLDAFLSNVKRSQARAQGKPMLLGLNIGKNATTPIEDATSDYLKALDGVYPHADYVTVNISSPNTKNLRALQSDEALDALLGAIAERREQLATQHGKRVPVFVKIAPDLDEEQVGVIAATLQRHGMDGVIATNTTISREAVKGLPYAQETGGLSGAPVLEASNQVIRQLRSALGSRYPIIGVGGILSGEDAVSKIRAGADVVQIYSGLIYRGPALVPETARAIAQLR.

Residues 65-69 (AGLDK) and Thr-89 contribute to the FMN site. Position 69 (Lys-69) interacts with substrate. 114 to 118 (NRLGF) serves as a coordination point for substrate. Residues Asn-147 and Asn-180 each contribute to the FMN site. Asn-180 provides a ligand contact to substrate. Ser-183 acts as the Nucleophile in catalysis. Residue Asn-185 coordinates substrate. Lys-225 and Thr-253 together coordinate FMN. 254–255 (NT) contacts substrate. FMN-binding positions include Gly-276, Gly-305, and 326–327 (YS).

Belongs to the dihydroorotate dehydrogenase family. Type 2 subfamily. Monomer. The cofactor is FMN.

The protein resides in the cell membrane. It catalyses the reaction (S)-dihydroorotate + a quinone = orotate + a quinol. The protein operates within pyrimidine metabolism; UMP biosynthesis via de novo pathway; orotate from (S)-dihydroorotate (quinone route): step 1/1. Catalyzes the conversion of dihydroorotate to orotate with quinone as electron acceptor. The polypeptide is Dihydroorotate dehydrogenase (quinone) (Delftia acidovorans (strain DSM 14801 / SPH-1)).